Consider the following 215-residue polypeptide: Pyrrolidone-carboxylate peptidase (215 aa).

Active-site residues include Glu-78, Cys-141, and His-165.

Belongs to the peptidase C15 family. Homotetramer.

It is found in the cytoplasm. The enzyme catalyses Release of an N-terminal pyroglutamyl group from a polypeptide, the second amino acid generally not being Pro.. Its function is as follows. Removes 5-oxoproline from various penultimate amino acid residues except L-proline. This is Pyrrolidone-carboxylate peptidase from Lactobacillus johnsonii (strain CNCM I-12250 / La1 / NCC 533).